A 264-amino-acid chain; its full sequence is MKIALGIEYNGSRYFGWQRQQEVASVQACLEAALSKVANEPIGVFCAGRTDAGVHATGQVVHFVTSAVRKDAAWTMGVNSHLPADIAVRWVKTVDNDFHARFSATARRYRYIIFSHRYRPAILAQGVTHCYMPLDAEKMERAAQCLLGENDFTSFRAVQCQSRTPWRNVKHVKVTRHGAYIVVDIKANAFVHHMVRNIVGSLIEIGCGNQDVTWMAELLALKDRTRAAATAKADGLYLVSVDYPDHFALPKVPMGPLFLADDEG.

Aspartate 51 acts as the Nucleophile in catalysis. A substrate-binding site is contributed by tyrosine 109.

This sequence belongs to the tRNA pseudouridine synthase TruA family. As to quaternary structure, homodimer.

The catalysed reaction is uridine(38/39/40) in tRNA = pseudouridine(38/39/40) in tRNA. In terms of biological role, formation of pseudouridine at positions 38, 39 and 40 in the anticodon stem and loop of transfer RNAs. The polypeptide is tRNA pseudouridine synthase A (Yersinia pseudotuberculosis serotype O:1b (strain IP 31758)).